Here is a 91-residue protein sequence, read N- to C-terminus: Probable Fe(2+)-trafficking protein (91 aa).

Belongs to the Fe(2+)-trafficking protein family.

Could be a mediator in iron transactions between iron acquisition and iron-requiring processes, such as synthesis and/or repair of Fe-S clusters in biosynthetic enzymes. This is Probable Fe(2+)-trafficking protein from Burkholderia multivorans (strain ATCC 17616 / 249).